We begin with the raw amino-acid sequence, 732 residues long: Glycine--tRNA ligase (732 aa).

Residues 1–27 (MRHVLSLVYKCSVFSKQVTVFSNHLRL) constitute a mitochondrion transit peptide. Residues 61 to 117 (ILAPLRANVKEQGDLVRKLKEEKAPEIDIKKAVAELKTRKKILEDKELSLAPAEDLF) form the WHEP-TRS domain. Glu-297 serves as a coordination point for glycine. Residues 329-331 (RNE) and 340-341 (RV) each bind ATP. Residue Glu-348 coordinates glycine. 453 to 454 (EC) is an ATP binding site. Residue 572-574 (EPS) coordinates glycine. Arg-579 is a binding site for ATP.

The protein belongs to the class-II aminoacyl-tRNA synthetase family. As to quaternary structure, homodimer.

Its subcellular location is the mitochondrion. It localises to the cytoplasm. The protein localises to the cell projection. It is found in the axon. The enzyme catalyses tRNA(Gly) + glycine + ATP = glycyl-tRNA(Gly) + AMP + diphosphate. The catalysed reaction is 2 ATP + H(+) = P(1),P(4)-bis(5'-adenosyl) tetraphosphate + diphosphate. Its function is as follows. Catalyzes the ATP-dependent ligation of glycine to the 3'-end of its cognate tRNA, via the formation of an aminoacyl-adenylate intermediate (Gly-AMP). Also produces diadenosine tetraphosphate (Ap4A), a universal pleiotropic signaling molecule needed for cell regulation pathways, by direct condensation of 2 ATPs. Thereby, may play a special role in Ap4A homeostasis. Required for terminal arborization of both dendrites and axons during development. This chain is Glycine--tRNA ligase, found in Bombyx mori (Silk moth).